Reading from the N-terminus, the 118-residue chain is UPF0295 protein BCE_0593 (118 aa).

Helical transmembrane passes span 12–32 (IRTF…LGVF) and 43–63 (FMMV…WIGM).

Belongs to the UPF0295 family.

It localises to the cell membrane. The polypeptide is UPF0295 protein BCE_0593 (Bacillus cereus (strain ATCC 10987 / NRS 248)).